Consider the following 349-residue polypeptide: DCD domain-containing protein NRP (349 aa).

Residues 157 to 201 form a disordered region; sequence NNNKNKGIDEDHQIQKGGKKNRKNQQNNNNQRNEDDKNNGLDKRF. Residues 188 to 201 are compositionally biased toward basic and acidic residues; that stretch reads RNEDDKNNGLDKRF. A DCD domain is found at 214-346; the sequence is ETIGGYIFVC…VLSLLDIFAD (133 aa).

As to quaternary structure, interacts with CRY2 in the cytoplasm. Interacts with Verticillium dahliae PevD1. Interacts with FYPP3. As to expression, highly expressed in sensecent leaves, cauline leaves and sepals. Expressed in the shoot apical meristem, leaf veins, central cylinder, root hair zone, root tips, rosette leaves, flowers and siliques.

Its subcellular location is the cytoplasm. In terms of biological role, contributes to the initial phase of responses to abiotic and biotic stress signals. Binds FYPP3 and facilitates FYPP3 degradation to promote abscisic acid (ABA) response. In Arabidopsis thaliana (Mouse-ear cress), this protein is DCD domain-containing protein NRP.